We begin with the raw amino-acid sequence, 515 residues long: Glucose-6-phosphate 1-dehydrogenase (515 aa).

Residue Ala-2 is modified to N-acetylalanine. A Phosphoserine modification is found at Ser-8. Thr-10 carries the phosphothreonine modification. NADP(+) is bound by residues Gly-38 to Lys-45 and Arg-72. Position 89 is an N6-acetyllysine (Lys-89). NADP(+) contacts are provided by Tyr-147 and Lys-171. D-glucose 6-phosphate-binding positions include Lys-171, His-201 to Lys-205, Glu-239, and Asp-258. Lys-171 is modified (N6-(2-hydroxyisobutyryl)lysine; alternate). The residue at position 171 (Lys-171) is an N6-acetyllysine; alternate. Residue His-263 is the Proton acceptor of the active site. Arg-357 contributes to the NADP(+) binding site. 2 residues coordinate D-glucose 6-phosphate: Lys-360 and Arg-365. Residues Lys-366, Arg-370, and Arg-393 each coordinate NADP(+). Gln-395 provides a ligand contact to D-glucose 6-phosphate. NADP(+)-binding positions include Tyr-401–Lys-403 and Asp-421–Thr-423. Lys-403 carries the post-translational modification N6-acetyllysine. Lys-432 is subject to N6-acetyllysine. Arg-487 lines the NADP(+) pocket. Lys-497 is subject to N6-acetyllysine. 2 residues coordinate NADP(+): Tyr-503 and Trp-509. Tyr-503 carries the phosphotyrosine modification.

Belongs to the glucose-6-phosphate dehydrogenase family. As to quaternary structure, homotetramer; dimer of dimers. Interacts with SIRT2; the interaction is enhanced by H(2)O(2) treatment. Forms a ternary complex with ALDOB and TP53; this interaction is direct. ALDOB stabilizes the complex inhibiting G6PD activity and keeping oxidative pentose phosphate metabolism in check. Acetylated by ELP3 at Lys-403; acetylation inhibits its homodimerization and enzyme activity. Deacetylated by SIRT2 at Lys-403; deacetylation stimulates its enzyme activity.

The protein resides in the cytoplasm. The protein localises to the cytosol. Its subcellular location is the membrane. The catalysed reaction is D-glucose 6-phosphate + NADP(+) = 6-phospho-D-glucono-1,5-lactone + NADPH + H(+). The protein operates within carbohydrate degradation; pentose phosphate pathway; D-ribulose 5-phosphate from D-glucose 6-phosphate (oxidative stage): step 1/3. Functionally, cytosolic glucose-6-phosphate dehydrogenase that catalyzes the first and rate-limiting step of the oxidative branch within the pentose phosphate pathway/shunt, an alternative route to glycolysis for the dissimilation of carbohydrates and a major source of reducing power and metabolic intermediates for fatty acid and nucleic acid biosynthetic processes. This is Glucose-6-phosphate 1-dehydrogenase (G6pdx) from Rattus norvegicus (Rat).